Reading from the N-terminus, the 360-residue chain is Phospho-N-acetylmuramoyl-pentapeptide-transferase (360 aa).

10 helical membrane passes run 26-46 (AIVS…RMIA), 72-92 (PTMG…LWAY), 94-114 (SNPY…VGFV), 132-152 (WKYF…YMIG), 168-188 (VMPQ…VGTS), 199-219 (GLAI…AWAT), 236-256 (AGEL…FLWF), 263-283 (VFMG…IAVL), 288-308 (FLLV…ILQV), and 338-358 (VIVR…ATLK).

The protein belongs to the glycosyltransferase 4 family. MraY subfamily. Mg(2+) is required as a cofactor.

Its subcellular location is the cell inner membrane. The enzyme catalyses UDP-N-acetyl-alpha-D-muramoyl-L-alanyl-gamma-D-glutamyl-meso-2,6-diaminopimeloyl-D-alanyl-D-alanine + di-trans,octa-cis-undecaprenyl phosphate = di-trans,octa-cis-undecaprenyl diphospho-N-acetyl-alpha-D-muramoyl-L-alanyl-D-glutamyl-meso-2,6-diaminopimeloyl-D-alanyl-D-alanine + UMP. Its pathway is cell wall biogenesis; peptidoglycan biosynthesis. Functionally, catalyzes the initial step of the lipid cycle reactions in the biosynthesis of the cell wall peptidoglycan: transfers peptidoglycan precursor phospho-MurNAc-pentapeptide from UDP-MurNAc-pentapeptide onto the lipid carrier undecaprenyl phosphate, yielding undecaprenyl-pyrophosphoryl-MurNAc-pentapeptide, known as lipid I. The chain is Phospho-N-acetylmuramoyl-pentapeptide-transferase from Erwinia tasmaniensis (strain DSM 17950 / CFBP 7177 / CIP 109463 / NCPPB 4357 / Et1/99).